The chain runs to 206 residues: Ras-related protein Rab7 (206 aa).

GTP contacts are provided by residues 15–22 (GDSGVGKT), 63–67 (DTAGQ), and 125–128 (NKVD). 2 S-geranylgeranyl cysteine lipidation sites follow: cysteine 205 and cysteine 206.

This sequence belongs to the small GTPase superfamily. Rab family.

It is found in the cell membrane. Its function is as follows. Protein transport. Probably involved in vesicular traffic. The polypeptide is Ras-related protein Rab7 (Cenchrus ciliaris (Buffelgrass)).